The primary structure comprises 324 residues: Glyoxylate/hydroxypyruvate reductase B (324 aa).

Residues Arg237 and Glu266 contribute to the active site. Residue His285 is the Proton donor of the active site.

Belongs to the D-isomer specific 2-hydroxyacid dehydrogenase family. GhrB subfamily. In terms of assembly, homodimer.

Its subcellular location is the cytoplasm. It catalyses the reaction glycolate + NADP(+) = glyoxylate + NADPH + H(+). The enzyme catalyses (R)-glycerate + NAD(+) = 3-hydroxypyruvate + NADH + H(+). It carries out the reaction (R)-glycerate + NADP(+) = 3-hydroxypyruvate + NADPH + H(+). Its function is as follows. Catalyzes the NADPH-dependent reduction of glyoxylate and hydroxypyruvate into glycolate and glycerate, respectively. This Shigella boydii serotype 4 (strain Sb227) protein is Glyoxylate/hydroxypyruvate reductase B.